The following is an 89-amino-acid chain: Phosphocarrier protein HPr (89 aa).

One can recognise an HPr domain in the interval 1–88 (MLKQSIEIIN…DLINGYFGEG (88 aa)). The Pros-phosphohistidine intermediate role is filled by His15. The residue at position 46 (Ser46) is a Phosphoserine; by HPrK/P.

Belongs to the HPr family.

The protein localises to the cytoplasm. Phosphorylation on Ser-46 inhibits the phosphoryl transfer from enzyme I to HPr. Its function is as follows. General (non sugar-specific) component of the phosphoenolpyruvate-dependent sugar phosphotransferase system (sugar PTS). This major carbohydrate active-transport system catalyzes the phosphorylation of incoming sugar substrates concomitantly with their translocation across the cell membrane. The phosphoryl group from phosphoenolpyruvate (PEP) is transferred to the phosphoryl carrier protein HPr by enzyme I. Phospho-HPr then transfers it to the PTS EIIA domain. The polypeptide is Phosphocarrier protein HPr (ptsH) (Neisseria meningitidis serogroup A / serotype 4A (strain DSM 15465 / Z2491)).